Here is a 334-residue protein sequence, read N- to C-terminus: Glycerol-3-phosphate dehydrogenase [NAD(P)+] (334 aa).

Residues serine 10, tryptophan 11, histidine 31, arginine 32, and lysine 105 each coordinate NADPH. The sn-glycerol 3-phosphate site is built by lysine 105, glycine 136, and serine 138. Alanine 140 contacts NADPH. Sn-glycerol 3-phosphate-binding residues include lysine 191, aspartate 244, serine 254, arginine 255, and asparagine 256. Residue lysine 191 is the Proton acceptor of the active site. Arginine 255 contacts NADPH. Positions 279 and 281 each coordinate NADPH.

It belongs to the NAD-dependent glycerol-3-phosphate dehydrogenase family.

Its subcellular location is the cytoplasm. It carries out the reaction sn-glycerol 3-phosphate + NAD(+) = dihydroxyacetone phosphate + NADH + H(+). The catalysed reaction is sn-glycerol 3-phosphate + NADP(+) = dihydroxyacetone phosphate + NADPH + H(+). It participates in membrane lipid metabolism; glycerophospholipid metabolism. Its function is as follows. Catalyzes the reduction of the glycolytic intermediate dihydroxyacetone phosphate (DHAP) to sn-glycerol 3-phosphate (G3P), the key precursor for phospholipid synthesis. The chain is Glycerol-3-phosphate dehydrogenase [NAD(P)+] from Chlorobium phaeobacteroides (strain BS1).